The chain runs to 379 residues: MSTVLPEDSVGLVTPQTARFDEPLALACGRSLASYELVYETYGSLNASASNAVLICHALSGHHHAAGYHATTDRKPGWWDSCIGPGKPIDTNRFFVVSLNNLGGCNGSTGPSSVNPATGKPYGADFPVLTVEDWVHSQARLADRLGIRQWAAIVGGSLGGMQALQWTMTYPDRVRHCVDIASAPKLSAQNIAFNEVARQAILTDPEFHGGSFQDQGVIPKRGLMLARMVGHITYLSDDSMGEKFGRELKSDKLNYDFHSVEFQVESYLRYQGEEFSGRFDANTYLLMTKALDYFDPAAANGGDLAATLAHVTADYCIMSFTTDWRFSPARSREIVDALMAARKNVCYLEIDSPYGHDAFLIPTPRYMQGFANYMNRIAI.

Positions 51–360 (NAVLICHALS…DSPYGHDAFL (310 aa)) constitute an AB hydrolase-1 domain. Residue S157 is the Nucleophile of the active site. Residue R227 coordinates substrate. Active-site residues include D323 and H356. Substrate is bound at residue D357.

This sequence belongs to the AB hydrolase superfamily. MetX family. In terms of assembly, homodimer.

Its subcellular location is the cytoplasm. It carries out the reaction L-homoserine + succinyl-CoA = O-succinyl-L-homoserine + CoA. The protein operates within amino-acid biosynthesis; L-methionine biosynthesis via de novo pathway; O-succinyl-L-homoserine from L-homoserine: step 1/1. Functionally, transfers a succinyl group from succinyl-CoA to L-homoserine, forming succinyl-L-homoserine. This is Homoserine O-succinyltransferase from Pseudomonas putida (strain W619).